A 345-amino-acid chain; its full sequence is MISLGLILFSSVLCHVATAGRTCPKPDDIPFATVVPLKTFYDPGEQIAYTCQPGYVFRGLTRRFTCPLTGVWPTNTVRCIPRVCPFAGILENGAVRYTTFEYPNTISFACNTGFYLNGSSSAKCTEEGKWSVDLPVCTRVTCPPPSVPKFATLSVFKPLATNNSLYGNKAVFECLPHYAMFGNDTITCTAHGNWTTLPECREVKCPFPSRPDNGFVNYPAKQILYYKDKAMYGCHDTYTLDGPEVVECNKFGNWSAQPSCKASCKLSVKKATVLYQGERVKLQEKFKDGMLHGQKVSFYCKNKEKKCSYTEDAECIDGTIEIPKCFKEHSSLAFWKTDASDVKPC.

A signal peptide spans 1–19 (MISLGLILFSSVLCHVATA). Sushi domains are found at residues 21 to 81 (RTCP…RCIP), 82 to 139 (RVCP…VCTR), 140 to 202 (VTCP…ECRE), and 203 to 262 (VKCP…SCKA). Intrachain disulfides connect C23/C66, C51/C79, C84/C124, C110/C137, C142/C188, C174/C200, C205/C248, C234/C260, C264/C315, C300/C325, and C307/C345. A glycan (O-linked (GalNAc...) threonine) is linked at T33. N-linked (GlcNAc...) asparagine glycans are attached at residues N117, N162, N183, and N193. The N-linked (GlcNAc...) asparagine glycan is linked to N253. Residues 263-345 (SCKLSVKKAT…KTDASDVKPC (83 aa)) form a sushi-like region.

As to expression, expressed by the liver and secreted in plasma.

The protein localises to the secreted. Binds to various kinds of negatively charged substances such as heparin, phospholipids, and dextran sulfate. May prevent activation of the intrinsic blood coagulation cascade by binding to phospholipids on the surface of damaged cells. This Canis lupus familiaris (Dog) protein is Beta-2-glycoprotein 1 (APOH).